The sequence spans 378 residues: GDP-mannose-dependent alpha-mannosyltransferase (378 aa).

Belongs to the glycosyltransferase group 1 family. Glycosyltransferase 4 subfamily.

It functions in the pathway phospholipid metabolism; phosphatidylinositol metabolism. Catalyzes the addition of a mannose residue from GDP-D-mannose to GlcAGroAc2 to generate 1,2-di-O-C16/C18:1-(alpha-D-mannopyranosyl)-(1-4)-(alpha-D-glucopyranosyluronic acid)-(1-3)-glycerol(ManGlcAGroAc2). This Mycobacterium tuberculosis (strain CDC 1551 / Oshkosh) protein is GDP-mannose-dependent alpha-mannosyltransferase (mgtA).